Here is a 150-residue protein sequence, read N- to C-terminus: SsrA-binding protein (150 aa).

This sequence belongs to the SmpB family.

Its subcellular location is the cytoplasm. Required for rescue of stalled ribosomes mediated by trans-translation. Binds to transfer-messenger RNA (tmRNA), required for stable association of tmRNA with ribosomes. tmRNA and SmpB together mimic tRNA shape, replacing the anticodon stem-loop with SmpB. tmRNA is encoded by the ssrA gene; the 2 termini fold to resemble tRNA(Ala) and it encodes a 'tag peptide', a short internal open reading frame. During trans-translation Ala-aminoacylated tmRNA acts like a tRNA, entering the A-site of stalled ribosomes, displacing the stalled mRNA. The ribosome then switches to translate the ORF on the tmRNA; the nascent peptide is terminated with the 'tag peptide' encoded by the tmRNA and targeted for degradation. The ribosome is freed to recommence translation, which seems to be the essential function of trans-translation. In Rubrobacter xylanophilus (strain DSM 9941 / JCM 11954 / NBRC 16129 / PRD-1), this protein is SsrA-binding protein.